A 379-amino-acid chain; its full sequence is D-threonine aldolase (379 aa).

Lysine 59 is subject to N6-(pyridoxal phosphate)lysine.

Belongs to the DSD1 family. Pyridoxal 5'-phosphate serves as cofactor. The cofactor is Mn(2+). It depends on Co(2+) as a cofactor. Requires Ni(2+) as cofactor. Mg(2+) is required as a cofactor.

It catalyses the reaction D-threonine = acetaldehyde + glycine. It carries out the reaction D-allo-threonine = acetaldehyde + glycine. Its activity is regulated as follows. Inhibited by the carbonyl reagents hydroxylamine, phenylhydrazine and semicarbazide. Inhibited by the chelating agent EDTA. Inhibited by the sulfhydryl reagent p-chloromercuribenzoic acid, and by sodium cyanide. Inhibited by iodoacetate, Ag(2)SO(4), HgCl(2) and CdCl(2). Competitively inhibited by beta-hydroxyaspartate and O-phospho-DL-threonine. Catalyzes the reversible cleavage of D-threonine or D-allothreonine into glycine and acetaldehyde. Can also cleave D-beta-phenylserine, D-beta-hydroxy-alpha-aminovaleric acid, D-beta-3,4-dihydroxyphenylserine and D-beta-3,4-methylenedioxyphenylserine into glycine and the corresponding aldehyde compounds. Inactive towards D-serine, beta-hydroxyaspartate and O-phospho-DL-threonine. The chain is D-threonine aldolase from Arthrobacter sp.